The primary structure comprises 196 residues: Chaperone protein TorD (196 aa).

Belongs to the TorD/DmsD family. TorD subfamily.

It is found in the cytoplasm. In terms of biological role, involved in the biogenesis of TorA. Acts on TorA before the insertion of the molybdenum cofactor and, as a result, probably favors a conformation of the apoenzyme that is competent for acquiring the cofactor. The sequence is that of Chaperone protein TorD from Pasteurella multocida (strain Pm70).